The following is a 306-amino-acid chain: uncharacterized protein (306 aa).

Residue Asp204 is the Proton acceptor of the active site.

Belongs to the aminoglycoside phosphotransferase family.

This is an uncharacterized protein from Bacillus subtilis (strain 168).